Here is a 330-residue protein sequence, read N- to C-terminus: tRNA U34 carboxymethyltransferase (330 aa).

Carboxy-S-adenosyl-L-methionine is bound by residues K91, W105, K110, G130, 152-154 (DPS), 181-182 (IE), M196, Y200, and R315.

The protein belongs to the class I-like SAM-binding methyltransferase superfamily. CmoB family. In terms of assembly, homotetramer.

The catalysed reaction is carboxy-S-adenosyl-L-methionine + 5-hydroxyuridine(34) in tRNA = 5-carboxymethoxyuridine(34) in tRNA + S-adenosyl-L-homocysteine + H(+). In terms of biological role, catalyzes carboxymethyl transfer from carboxy-S-adenosyl-L-methionine (Cx-SAM) to 5-hydroxyuridine (ho5U) to form 5-carboxymethoxyuridine (cmo5U) at position 34 in tRNAs. This Shewanella halifaxensis (strain HAW-EB4) protein is tRNA U34 carboxymethyltransferase.